Consider the following 324-residue polypeptide: 1-deoxyxylulose-5-phosphate synthase YajO (324 aa).

Tyr-61 (proton donor) is an active-site residue.

This sequence belongs to the aldo/keto reductase family. Aldo/keto reductase 2 subfamily.

The catalysed reaction is D-ribulose 5-phosphate + AH2 = 1-deoxy-D-xylulose 5-phosphate + A + H2O. With respect to regulation, NADH, NADPH or ATP do not increase activity. Its function is as follows. Catalyzes the conversion of ribulose 5-phosphate (Ru5P) to 1-deoxy-D-xylulose 5-phosphate (DXP), providing a direct route from pentoses to terpenes. May play a role in biosynthesis of DXP under conditions of thiamine starvation. The protein is 1-deoxyxylulose-5-phosphate synthase YajO (yajO) of Escherichia coli (strain K12).